Consider the following 365-residue polypeptide: Probable 7-methylxanthine methyltransferase PCS2 (365 aa).

Y19 provides a ligand contact to S-adenosyl-L-homocysteine. T26 serves as a coordination point for theobromine. 5 residues coordinate S-adenosyl-L-homocysteine: C62, D99, L100, S134, and F135. Theobromine contacts are provided by Y152, H155, and W156. N173 is a Mg(2+) binding site. Position 221 (R221) interacts with theobromine. Positions 259, 261, and 262 each coordinate Mg(2+).

Belongs to the methyltransferase superfamily. Type-7 methyltransferase family. Mg(2+) is required as a cofactor.

The enzyme catalyses 7-methylxanthine + S-adenosyl-L-methionine = theobromine + S-adenosyl-L-homocysteine + H(+). No detectable N-methyltransferase activity. The polypeptide is Probable 7-methylxanthine methyltransferase PCS2 (Camellia ptilophylla (Cocoa tea)).